The chain runs to 238 residues: ATP-dependent dethiobiotin synthetase BioD (238 aa).

12–17 is an ATP binding site; that stretch reads EVGKTV. Thr16 provides a ligand contact to Mg(2+). The active site involves Lys37. Substrate is bound at residue Thr41. ATP is bound by residues Asp50, 109-112, 170-171, and 200-202; these read EGAG, GS, and PAG. The Mg(2+) site is built by Asp50 and Glu109.

The protein belongs to the dethiobiotin synthetase family. As to quaternary structure, homodimer. Mg(2+) is required as a cofactor.

It localises to the cytoplasm. It carries out the reaction (7R,8S)-7,8-diammoniononanoate + CO2 + ATP = (4R,5S)-dethiobiotin + ADP + phosphate + 3 H(+). Its pathway is cofactor biosynthesis; biotin biosynthesis; biotin from 7,8-diaminononanoate: step 1/2. Functionally, catalyzes a mechanistically unusual reaction, the ATP-dependent insertion of CO2 between the N7 and N8 nitrogen atoms of 7,8-diaminopelargonic acid (DAPA, also called 7,8-diammoniononanoate) to form a ureido ring. This chain is ATP-dependent dethiobiotin synthetase BioD, found in Streptomyces coelicolor (strain ATCC BAA-471 / A3(2) / M145).